The sequence spans 413 residues: Unsaturated 3S-rhamnoglycuronyl hydrolase (413 aa).

The first 21 residues, 1-21, serve as a signal peptide directing secretion; that stretch reads MNHTKLKLSAVALTLALGLSA. Cys-22 carries N-palmitoyl cysteine lipidation. The S-diacylglycerol cysteine moiety is linked to residue Cys-22. Catalysis depends on Asp-203, which acts as the Proton donor.

It belongs to the glycosyl hydrolase 105 family.

It localises to the cell membrane. Glucuronyl hydrolase involved in ulvan degradation. Ulvan is the main polysaccharide component of the Ulvales (green seaweed) cell wall. It is composed of disaccharide building blocks comprising 3-sulfated rhamnose (Rha3S) linked to D-glucuronic acid (GlcA), L-iduronic acid (IduA), or D-xylose (Xyl). Unsaturated 3S-rhamnoglycuronyl hydrolase works together with ulvan lyases to fully degrade the ulvan polymer, catalyzing specifically the cleavage of the unsaturated 4-deoxy-L-threo-hex-4-enopyranosiduronic acid (deltaUA) of the deltaUA-oligosaccharides deltaUA-Rha3S, deltaUA-Rha3S-IduA-Rha3S and deltaUA-Rha3S-Xyl-Rha3S, the end products of the ulvan lyase reaction. In Alteromonas sp. (strain LOR), this protein is Unsaturated 3S-rhamnoglycuronyl hydrolase.